The following is a 433-amino-acid chain: Trigger factor (433 aa).

The PPIase FKBP-type domain occupies 163-248; the sequence is GDFVTFDFKG…IKEIKVKELP (86 aa).

The protein belongs to the FKBP-type PPIase family. Tig subfamily.

The protein localises to the cytoplasm. It catalyses the reaction [protein]-peptidylproline (omega=180) = [protein]-peptidylproline (omega=0). Its function is as follows. Involved in protein export. Acts as a chaperone by maintaining the newly synthesized protein in an open conformation. Functions as a peptidyl-prolyl cis-trans isomerase. The polypeptide is Trigger factor (Geotalea uraniireducens (strain Rf4) (Geobacter uraniireducens)).